The sequence spans 375 residues: Putative actin-26 (375 aa).

The protein belongs to the actin family.

The protein localises to the cytoplasm. Its subcellular location is the cytoskeleton. It catalyses the reaction ATP + H2O = ADP + phosphate + H(+). Functionally, actins are highly conserved proteins that are involved in various types of cell motility and are ubiquitously expressed in all eukaryotic cells. Multiple isoforms are involved in various cellular functions such as cytoskeleton structure, cell mobility, chromosome movement and muscle contraction. The polypeptide is Putative actin-26 (act26) (Dictyostelium discoideum (Social amoeba)).